We begin with the raw amino-acid sequence, 162 residues long: Neuritin-like protein (162 aa).

The signal sequence occupies residues 1–32; the sequence is MMCNCCHCHWRRRCQRLPCALTLLLLLPLAVA. Ala136 is lipidated: GPI-anchor amidated alanine. A propeptide spans 137–162 (removed in mature form); it reads PALAPAPAPVLLAAALALACLLGPLA.

Belongs to the neuritin family.

The protein resides in the cell membrane. The sequence is that of Neuritin-like protein (Nrn1l) from Mus musculus (Mouse).